The primary structure comprises 391 residues: MPIQPAFGNKDLNPQEVRKNQLISSRLSSIYERWGYEEVSPPKVERLETLTACGGISNKEIVKLVADDPIGLRPDMTASIARAASTRLAYKDRPLRLWTSGTIFKSKEDCDGKFVIEEGLQSGVELIGISDMAAEIELLYLLLDSMNQLEICSNQNPILLIGHQSILKLILSGISNDYKNKIQKYLTNYDLVETEDLDIDIEIKNKLLKVLKIRGNPSDVLDKLVNIYGSNTLFDELRRLFLIIEPISKKYGVSIQLDPTYQPHFKLYNGLIFQLICQTDYAPKVIARGGRYDDLVNSFTTSIENETGAGFSFSIDKIRELKLKVEYDDKKVARTLIAFSKSKRYEDALEKQLEIHRKGSMAMVELKPCDTKKEAEFLVNKRGFDKLVWIS.

The protein belongs to the class-II aminoacyl-tRNA synthetase family. HisZ subfamily. In terms of assembly, heteromultimer composed of HisG and HisZ subunits.

The protein resides in the cytoplasm. It participates in amino-acid biosynthesis; L-histidine biosynthesis; L-histidine from 5-phospho-alpha-D-ribose 1-diphosphate: step 1/9. Required for the first step of histidine biosynthesis. May allow the feedback regulation of ATP phosphoribosyltransferase activity by histidine. In Prochlorococcus marinus (strain SARG / CCMP1375 / SS120), this protein is ATP phosphoribosyltransferase regulatory subunit.